Consider the following 133-residue polypeptide: Ribosome-binding factor A (133 aa).

It belongs to the RbfA family. Monomer. Binds 30S ribosomal subunits, but not 50S ribosomal subunits or 70S ribosomes.

It is found in the cytoplasm. Functionally, one of several proteins that assist in the late maturation steps of the functional core of the 30S ribosomal subunit. Associates with free 30S ribosomal subunits (but not with 30S subunits that are part of 70S ribosomes or polysomes). Required for efficient processing of 16S rRNA. May interact with the 5'-terminal helix region of 16S rRNA. The protein is Ribosome-binding factor A of Bordetella pertussis (strain Tohama I / ATCC BAA-589 / NCTC 13251).